We begin with the raw amino-acid sequence, 291 residues long: 5-hydroxytryptamine receptor 1D (291 aa).

The chain crosses the membrane as a helical span at residues 30–54; sequence LCDIWLSSDITCCTASILHLCVIAL. A disulfide bridge links cysteine 31 with cysteine 108. Serotonin-binding residues include aspartate 38 and cysteine 42. The DRY motif; important for ligand-induced conformation changes signature appears at 55-57; it reads DRY. Residues 75 to 96 traverse the membrane as a helical segment; sequence AAAMIAIVWAISICISIPPLFW. Residue asparagine 111 is glycosylated (N-linked (GlcNAc...) asparagine). 3 helical membrane passes run 115-138, 221-246, and 256-279; these read ISYT…ILYG, KTLG…VLPI, and ALFD…YTVF. Serine 241 contributes to the serotonin binding site. The NPxxY motif; important for ligand-induced conformation changes and signaling signature appears at 272-276; the sequence is NPIIY.

It belongs to the G-protein coupled receptor 1 family. In terms of assembly, homodimer. Heterodimer with HTR1B.

It is found in the cell membrane. Its function is as follows. G-protein coupled receptor for 5-hydroxytryptamine (serotonin). Also functions as a receptor for ergot alkaloid derivatives, various anxiolytic and antidepressant drugs and other psychoactive substances. Ligand binding causes a conformation change that triggers signaling via guanine nucleotide-binding proteins (G proteins) and modulates the activity of downstream effectors, such as adenylate cyclase. HTR1D is coupled to G(i)/G(o) G alpha proteins and mediates inhibitory neurotransmission by inhibiting adenylate cyclase activity. Regulates the release of 5-hydroxytryptamine in the brain, and thereby affects neural activity. May also play a role in regulating the release of other neurotransmitters. May play a role in vasoconstriction. The polypeptide is 5-hydroxytryptamine receptor 1D (HTR1D) (Sus scrofa (Pig)).